The following is a 168-amino-acid chain: MSDYVVIGKITKTHGLFGSVKVLPLTNALEVFQKLENVFIKNDAQSNTHRLQIEEIRKAGKGFLIKFSGIDDEERARKIVGLSLAVRVTDLPKPKSPNEYYYYELLNVEVLDQSGNFIGRVEDIIQTGSNEVAVVKNGSFEMLIPVIHDYIIKFEKRKRLVVKVPEWI.

One can recognise a PRC barrel domain in the interval 97–168 (PNEYYYYELL…RLVVKVPEWI (72 aa)).

This sequence belongs to the RimM family. Binds ribosomal protein uS19.

It localises to the cytoplasm. Its function is as follows. An accessory protein needed during the final step in the assembly of 30S ribosomal subunit, possibly for assembly of the head region. Essential for efficient processing of 16S rRNA. May be needed both before and after RbfA during the maturation of 16S rRNA. It has affinity for free ribosomal 30S subunits but not for 70S ribosomes. In Pseudothermotoga lettingae (strain ATCC BAA-301 / DSM 14385 / NBRC 107922 / TMO) (Thermotoga lettingae), this protein is Ribosome maturation factor RimM.